The sequence spans 970 residues: Sodium/calcium exchanger 1 (970 aa).

The signal sequence occupies residues Met1 to Ala32. Residues Glu33–Lys71 are Extracellular-facing. A glycan (N-linked (GlcNAc...) asparagine) is linked at Asn41. The chain crosses the membrane as a helical span at residues Ile72–Ile92. Residues Ala93 to Asn133 lie on the Cytoplasmic side of the membrane. A helical membrane pass occupies residues Leu134–Cys154. Residues Ala138–Ile178 form an Alpha-1 repeat. Over Gly155–Thr167 the chain is Extracellular. Residue Asn157 is glycosylated (N-linked (GlcNAc...) asparagine). Residues Ile168 to Pro188 traverse the membrane as a helical segment. Topologically, residues Asp189–Phe201 are cytoplasmic. A helical transmembrane segment spans residues Phe202 to Ile222. Residues Ser223–Glu228 lie on the Extracellular side of the membrane. A helical transmembrane segment spans residues Val229–Ala249. At Asp250 to Gly797 the chain is on the cytoplasmic side. The segment at Arg251–Gly270 is putative calmodulin-binding region. Ser282 and Ser389 each carry phosphoserine. Calx-beta domains follow at residues Val393–Ser493 and Ala524–Gly624. Residues Glu417, Asp453, Asp478, Asp479, Ile481, Glu483, Glu486, Asp530, Asp531, Asp532, Glu548, Asp584, Asp610, Glu611, Glu612, and Glu715 each coordinate Ca(2+). A helical transmembrane segment spans residues Trp798 to Leu818. At Ala819–His821 the chain is on the extracellular side. The chain crosses the membrane as a helical span at residues Phe822–Thr842. The Alpha-2 repeat unit spans residues Ala839–Val875. The Cytoplasmic portion of the chain corresponds to Ser843–Asn871. The chain crosses the membrane as a helical span at residues Ala872 to Ala892. Over Asn893–Thr903 the chain is Extracellular. Residues Leu904–Tyr924 traverse the membrane as a helical segment. Over Arg925–Lys941 the chain is Cytoplasmic. The helical transmembrane segment at Leu942 to Glu962 threads the bilayer. Over Ala963 to Phe970 the chain is Extracellular.

It belongs to the Ca(2+):cation antiporter (CaCA) (TC 2.A.19) family. SLC8 subfamily. In terms of tissue distribution, cardiac sarcolemma (at protein level).

It is found in the cell membrane. The protein resides in the sarcolemma. It catalyses the reaction Ca(2+)(in) + 3 Na(+)(out) = Ca(2+)(out) + 3 Na(+)(in). Its activity is regulated as follows. Activated by micromolar levels of Ca(2+). In the absence of regulatory Ca(2+), channels open rapidly, and then inactivate rapidly. Inactivation is enhanced by Na(+) and is inhibited by micromolar levels of Ca(2+). In terms of biological role, mediates the exchange of one Ca(2+) ion against three to four Na(+) ions across the cell membrane, and thereby contributes to the regulation of cytoplasmic Ca(2+) levels and Ca(2+)-dependent cellular processes. Contributes to Ca(2+) transport during excitation-contraction coupling in muscle. In a first phase, voltage-gated channels mediate the rapid increase of cytoplasmic Ca(2+) levels due to release of Ca(2+) stores from the endoplasmic reticulum. SLC8A1 mediates the export of Ca(2+) from the cell during the next phase, so that cytoplasmic Ca(2+) levels rapidly return to baseline. Required for normal embryonic heart development and the onset of heart contractions. The polypeptide is Sodium/calcium exchanger 1 (SLC8A1) (Canis lupus familiaris (Dog)).